Consider the following 72-residue polypeptide: Crustacean hyperglycemic hormone B (72 aa).

Pyrrolidone carboxylic acid is present on glutamine 1. At phenylalanine 3 the chain carries D-phenylalanine; in form CHHB-II. 3 disulfide bridges follow: cysteine 7–cysteine 43, cysteine 23–cysteine 39, and cysteine 26–cysteine 52. Valine 72 carries the post-translational modification Valine amide.

In terms of processing, stereoinversion of L-Phe (in CHHB-I) to D-Phe (in CHHB-II).

Its subcellular location is the secreted. Hormone found in the sinus gland of isopods and decapods which controls the blood sugar level. Has a secretagogue action over the amylase released from the midgut gland. May act as a stress hormone and may be involved in the control of molting and reproduction. The sequence is that of Crustacean hyperglycemic hormone B from Cherax destructor (Common yabby crayfish).